Consider the following 425-residue polypeptide: MGSLSSPTSLTPYQVLSKYKKFPSPDEEFWWDHAASTLADLIKWTKATPAQEYEFLQFFYEHVIPNFSWYRPYDVPGRAWNTGITPSGLPLEYSVNWRNIDANAMVRVGVEPISQFAGTARDPYSHYKIWDTLNQLSQVKALKSFDLELWRHFSSALCTSREEEALLDQTRTLPESFSIAKMQHSMGFDFCDDEVIVKIYLIPNMKARASGTPLAELLTGSIHAIYRDTIDRETLATVINYLDSSSNFNDATWFSFDCIPRSQSRIKLYGSDFRTTWSRAEDLWTVGGRYTDAVTMKGLAYLKELWDLLPIQDFETLPEQAVQNPPMLWAYEIRPGDKTPSPRIYIPGHCLNDKKVADGLSTFFKRVGWSDLGDQYTDRLFSMFPKQDLKDSTALHTWIAFSYTEKSGVYMNCYYLASASFPFKL.

Residues 83 to 84 (GI) and Glu92 contribute to the L-tryptophan site. 9 residues coordinate substrate: Arg107, Lys198, Tyr200, Arg265, Lys267, Tyr269, Tyr345, Tyr410, and Tyr414.

This sequence belongs to the tryptophan dimethylallyltransferase family. As to quaternary structure, homodimer.

It functions in the pathway secondary metabolite biosynthesis. Functionally, aromatic prenyl transferase; part of the gene cluster that mediates the biosynthesis of the indole diterpenes penitrems. The geranylgeranyl diphosphate (GGPP) synthase penG catalyzes the first step in penitrem biosynthesis via conversion of farnesyl pyrophosphate and isopentyl pyrophosphate into geranylgeranyl pyrophosphate (GGPP). Condensation of indole-3-glycerol phosphate with GGPP by the prenyl transferase penC then forms 3-geranylgeranylindole (3-GGI). Epoxidation by the FAD-dependent monooxygenase penM leads to a epoxidized-GGI that is substrate of the terpene cyclase penB for cyclization to yield paspaline. Paspaline is subsequently converted to 13-desoxypaxilline by the cytochrome P450 monooxygenase penP, the latter being then converted to paxilline by the cytochrome P450 monooxygenase penQ. Paxilline is converted to beta-paxitriol via C-10 ketoreduction by the short-chain dehydrogenase PC-15 which can be monoprenylated at the C-20 by the indole diterpene prenyltransferase penD. A two-step elimination (acetylation and elimination) process performed by the O-acetyltransferase PC-16 and the P.simplicissimum ptmI-ortholog not yet identified in P.crustosum, leads to the production of the prenylated form of penijanthine. The FAD-linked oxidoreductase ptmO then converts the prenylated form of penijanthine into PC-M5 which is in turn transformed into PC-M4 by the aromatic dimethylallyltransferase PC-22. A series of oxidation steps involving 4 cytochrome P450 monooxygenases (PC-21, PC-05, PC-23, PC-20) and a FAD-dependent monooxygenase (PC-14) are required for the transformation of PC-M4 to penitrems A and E. Synthesis of these final products is proposed to proceed via penitrems D and C (PC-21, PC-05, PC-14) and penitrems B and F (PC-21, PC-05, PC-14, PC-23). The protein is Aromatic prenyl transferase PC-22 of Penicillium crustosum (Blue mold fungus).